A 131-amino-acid polypeptide reads, in one-letter code: Leptin receptor gene-related protein (131 aa).

Helical transmembrane passes span 7-27 (LVAL…GCAL), 32-52 (VYWP…HFIA), 69-89 (LAYF…VILA), and 100-120 (GLVL…FLVF).

Belongs to the OB-RGRP/VPS55 family. Interacts with LEPR. Interacts with RAB13.

It localises to the golgi apparatus membrane. It is found in the endosome membrane. Functionally, negatively regulates leptin receptor (LEPR) cell surface expression, and thus decreases response to leptin/LEP. Negatively regulates growth hormone (GH) receptor cell surface expression in liver. May play a role in liver resistance to GH during periods of reduced nutrient availability. In Bos taurus (Bovine), this protein is Leptin receptor gene-related protein (LEPROT).